Reading from the N-terminus, the 117-residue chain is Mediator of RNA polymerase II transcription subunit 11 (117 aa).

The residue at position 2 (Ala2) is an N-acetylalanine.

It belongs to the Mediator complex subunit 11 family. Component of the Mediator complex, which is composed of MED1, MED4, MED6, MED7, MED8, MED9, MED10, MED11, MED12, MED13, MED13L, MED14, MED15, MED16, MED17, MED18, MED19, MED20, MED21, MED22, MED23, MED24, MED25, MED26, MED27, MED29, MED30, MED31, CCNC, CDK8 and CDC2L6/CDK11. The MED12, MED13, CCNC and CDK8 subunits form a distinct module termed the CDK8 module. Mediator containing the CDK8 module is less active than Mediator lacking this module in supporting transcriptional activation. Individual preparations of the Mediator complex lacking one or more distinct subunits have been variously termed ARC, CRSP, DRIP, PC2, SMCC and TRAP.

It localises to the nucleus. In terms of biological role, component of the Mediator complex, a coactivator involved in the regulated transcription of nearly all RNA polymerase II-dependent genes. Mediator functions as a bridge to convey information from gene-specific regulatory proteins to the basal RNA polymerase II transcription machinery. Mediator is recruited to promoters by direct interactions with regulatory proteins and serves as a scaffold for the assembly of a functional pre-initiation complex with RNA polymerase II and the general transcription factors. The chain is Mediator of RNA polymerase II transcription subunit 11 (MED11) from Bos taurus (Bovine).